We begin with the raw amino-acid sequence, 282 residues long: ESX-1 secretion-associated protein EspG1 (282 aa).

It belongs to the EspG family. As to quaternary structure, interacts specifically with ESX-1-dependent PE/PPE proteins.

The protein resides in the cytoplasm. Functionally, part of the ESX-1 / type VII specialized secretion system (T7SS), which exports several proteins including EsxA and EsxB. Specific chaperone for cognate PE/PPE proteins, plays an important role in preventing aggregation of PE/PPE dimers. Also plays a role in DNA conjugation, in at least recipient strain. This Mycolicibacterium smegmatis (strain ATCC 700084 / mc(2)155) (Mycobacterium smegmatis) protein is ESX-1 secretion-associated protein EspG1.